The chain runs to 340 residues: NADH-quinone oxidoreductase subunit H 2 (340 aa).

8 helical membrane-spanning segments follow: residues 10-30 (LIVA…ILLL), 84-104 (FLFK…FVAI), 126-146 (VALL…IFGG), 172-192 (MGFA…LDIV), 198-218 (VWNI…GLAE), 255-275 (VIVL…WNGI), 279-299 (MPPL…FIWF), and 318-338 (VLLP…GAAA).

Belongs to the complex I subunit 1 family. In terms of assembly, NDH-1 is composed of 14 different subunits. Subunits NuoA, H, J, K, L, M, N constitute the membrane sector of the complex.

Its subcellular location is the cell inner membrane. The enzyme catalyses a quinone + NADH + 5 H(+)(in) = a quinol + NAD(+) + 4 H(+)(out). NDH-1 shuttles electrons from NADH, via FMN and iron-sulfur (Fe-S) centers, to quinones in the respiratory chain. The immediate electron acceptor for the enzyme in this species is believed to be ubiquinone. Couples the redox reaction to proton translocation (for every two electrons transferred, four hydrogen ions are translocated across the cytoplasmic membrane), and thus conserves the redox energy in a proton gradient. This subunit may bind ubiquinone. The polypeptide is NADH-quinone oxidoreductase subunit H 2 (Rhizobium etli (strain ATCC 51251 / DSM 11541 / JCM 21823 / NBRC 15573 / CFN 42)).